We begin with the raw amino-acid sequence, 458 residues long: ATP synthase subunit beta (458 aa).

148–155 provides a ligand contact to ATP; sequence GGAGVGKT.

It belongs to the ATPase alpha/beta chains family. F-type ATPases have 2 components, CF(1) - the catalytic core - and CF(0) - the membrane proton channel. CF(1) has five subunits: alpha(3), beta(3), gamma(1), delta(1), epsilon(1). CF(0) has three main subunits: a(1), b(2) and c(9-12). The alpha and beta chains form an alternating ring which encloses part of the gamma chain. CF(1) is attached to CF(0) by a central stalk formed by the gamma and epsilon chains, while a peripheral stalk is formed by the delta and b chains.

It localises to the cell inner membrane. The catalysed reaction is ATP + H2O + 4 H(+)(in) = ADP + phosphate + 5 H(+)(out). Functionally, produces ATP from ADP in the presence of a proton gradient across the membrane. The catalytic sites are hosted primarily by the beta subunits. The chain is ATP synthase subunit beta from Shewanella woodyi (strain ATCC 51908 / MS32).